The chain runs to 101 residues: Putative regulatory protein PrgT (101 aa).

In terms of biological role, might be involved in the expression of prgA, but is not required for activation of the expression of prgB. This is Putative regulatory protein PrgT (prgT) from Enterococcus faecalis (strain ATCC 47077 / OG1RF).